Here is a 1516-residue protein sequence, read N- to C-terminus: Alpha-2-macroglobulin homolog (1516 aa).

A signal peptide spans 1-26; sequence MSNLRRFSRSLAVAALVLLPFAAVQA.

The protein belongs to the protease inhibitor I39 (alpha-2-macroglobulin) family. Bacterial alpha-2-macroglobulin subfamily.

The sequence is that of Alpha-2-macroglobulin homolog from Pseudomonas aeruginosa (strain ATCC 15692 / DSM 22644 / CIP 104116 / JCM 14847 / LMG 12228 / 1C / PRS 101 / PAO1).